The primary structure comprises 337 residues: tRNA N6-adenosine threonylcarbamoyltransferase (337 aa).

H110 and H114 together coordinate Fe cation. Residues 133 to 137 (MVSGG), D166, G179, D183, and N276 contribute to the substrate site. Residue D302 participates in Fe cation binding.

Belongs to the KAE1 / TsaD family. Fe(2+) is required as a cofactor.

The protein resides in the cytoplasm. The enzyme catalyses L-threonylcarbamoyladenylate + adenosine(37) in tRNA = N(6)-L-threonylcarbamoyladenosine(37) in tRNA + AMP + H(+). Functionally, required for the formation of a threonylcarbamoyl group on adenosine at position 37 (t(6)A37) in tRNAs that read codons beginning with adenine. Is involved in the transfer of the threonylcarbamoyl moiety of threonylcarbamoyl-AMP (TC-AMP) to the N6 group of A37, together with TsaE and TsaB. TsaD likely plays a direct catalytic role in this reaction. The polypeptide is tRNA N6-adenosine threonylcarbamoyltransferase (Fervidobacterium nodosum (strain ATCC 35602 / DSM 5306 / Rt17-B1)).